Reading from the N-terminus, the 366-residue chain is MKPIVCDKGHGMVQAGFAGDEAPKVVFPCVVGRPRDGLNPNESYVGEEGHANRDILTLKDPMEHGIVNNWDDMEKIWHYTFYNELRVDPEEHPVLLTEAPYNPKANREKMTQIMFESFDVPAMYVSMQSVLYLYSSGRTTGVVLDLGERVSHTVPVYEGYALPHGILRLDLGGRDLTDYLIEIMTERGYTYTTSAEREIVRDIKEKLCYVALDYEQEMEKTTKGWTIDKTYVLPDGQEITIEAERFMCPEVLFQPSVIGKESSGIHEATRNSILKCPVDTRRDMYGNILMTGGTTMLHGIKERMTKELNALVPSSMKVKVVVPPESECSVWIGGSILASLSTFHQMWITKDEYEEHGAAIVHRKCV.

Belongs to the actin family. As to quaternary structure, polymerization of globular actin (G-actin) leads to a structural filament (F-actin) in the form of a two-stranded helix. The binding of profilin to monomeric G-actin cause the sequestration of actin into profilactin complexes, and prevents the polymerization.

The protein resides in the cytoplasm. The protein localises to the cytoskeleton. In terms of biological role, actins are highly conserved proteins that are involved in various types of cell motility and are ubiquitously expressed in all eukaryotic cells. Essential component of cell cytoskeleton; plays an important role in cytoplasmic streaming, cell shape determination, cell division, organelle movement and extension growth. The sequence is that of Putative actin-9 (ACT9) from Arabidopsis thaliana (Mouse-ear cress).